The sequence spans 239 residues: LexA repressor (239 aa).

Residues 26–46 (FDEMKDALDLASKSGIHRLIT) constitute a DNA-binding region (H-T-H motif). Active-site for autocatalytic cleavage activity residues include S159 and K197.

It belongs to the peptidase S24 family. As to quaternary structure, homodimer.

It carries out the reaction Hydrolysis of Ala-|-Gly bond in repressor LexA.. Functionally, represses a number of genes involved in the response to DNA damage (SOS response), including recA and lexA. In the presence of single-stranded DNA, RecA interacts with LexA causing an autocatalytic cleavage which disrupts the DNA-binding part of LexA, leading to derepression of the SOS regulon and eventually DNA repair. This chain is LexA repressor, found in Allorhizobium ampelinum (strain ATCC BAA-846 / DSM 112012 / S4) (Agrobacterium vitis (strain S4)).